A 130-amino-acid polypeptide reads, in one-letter code: Spore coat protein M (130 aa).

In terms of biological role, involved in spore outer coat assembly. May be part of a cross-linked insoluble skeleton that surrounds the spore, serves as a matrix for the assembly of additional outer coat material, and confers structural stability to the final structure. This chain is Spore coat protein M (cotM), found in Bacillus subtilis (strain 168).